Reading from the N-terminus, the 388-residue chain is MDTKGSLADKIDIFFLLKQQKLITKKELGMLLPTQSYEDYRVNYYRRRVPEVFDRNFRKEWFIYRYLDDFFCEERRKAIWNIYSFKIEGPCIIARNISDDVPGSVINSAFSQCVNLERFWIQHQTSQNGFSRLCYIILKKEASVQESIDFMRSVLDRKLGIELEEFDISGVVEPKILSDCNDYDTAMSIFSSMCRMFDINEEEVLKKYSSALGDTSTRQNTAEFICNALKNVFLYCYTCAHQYDDPLEMMMGCRNHKTTDAAARRREFLSSHQEFGYLDVKTKEEELNNMTTIVNENHYKCGFCGKAFESEKFIFNHFNNKHENEIRRIEKGIENFKKFICRIDCFVLGIIEGTDDDRIPKFILPNIKDDRVVYDMGAVFSGEIAIGK.

A C2H2-type zinc finger spans residues 299-322 (YKCGFCGKAFESEKFIFNHFNNKH).

This chain is Zinc finger C2H2 protein ECU10_0150, found in Encephalitozoon cuniculi (strain GB-M1) (Microsporidian parasite).